The primary structure comprises 78 residues: Large ribosomal subunit protein bL28 (78 aa).

It belongs to the bacterial ribosomal protein bL28 family.

This chain is Large ribosomal subunit protein bL28, found in Bordetella avium (strain 197N).